The primary structure comprises 125 residues: Phosphoribosyl-AMP cyclohydrolase (125 aa).

Asp-91 lines the Mg(2+) pocket. Cys-92 serves as a coordination point for Zn(2+). The Mg(2+) site is built by Asp-93 and Asp-95. The Zn(2+) site is built by Cys-108 and Cys-115.

It belongs to the PRA-CH family. As to quaternary structure, homodimer. Mg(2+) serves as cofactor. Requires Zn(2+) as cofactor.

The protein resides in the cytoplasm. The enzyme catalyses 1-(5-phospho-beta-D-ribosyl)-5'-AMP + H2O = 1-(5-phospho-beta-D-ribosyl)-5-[(5-phospho-beta-D-ribosylamino)methylideneamino]imidazole-4-carboxamide. It participates in amino-acid biosynthesis; L-histidine biosynthesis; L-histidine from 5-phospho-alpha-D-ribose 1-diphosphate: step 3/9. In terms of biological role, catalyzes the hydrolysis of the adenine ring of phosphoribosyl-AMP. The protein is Phosphoribosyl-AMP cyclohydrolase of Streptomyces griseus subsp. griseus (strain JCM 4626 / CBS 651.72 / NBRC 13350 / KCC S-0626 / ISP 5235).